We begin with the raw amino-acid sequence, 386 residues long: Succinate--CoA ligase [ADP-forming] subunit beta (386 aa).

In terms of domain architecture, ATP-grasp spans Lys9–Leu244. ATP is bound by residues Lys46, Gly53–Gly55, Val102, and Glu107. The Mg(2+) site is built by Asn199 and Asp213. Substrate-binding positions include Asn264 and Gly321–Met323.

The protein belongs to the succinate/malate CoA ligase beta subunit family. As to quaternary structure, heterotetramer of two alpha and two beta subunits. Requires Mg(2+) as cofactor.

The enzyme catalyses succinate + ATP + CoA = succinyl-CoA + ADP + phosphate. It carries out the reaction GTP + succinate + CoA = succinyl-CoA + GDP + phosphate. Its pathway is carbohydrate metabolism; tricarboxylic acid cycle; succinate from succinyl-CoA (ligase route): step 1/1. Its function is as follows. Succinyl-CoA synthetase functions in the citric acid cycle (TCA), coupling the hydrolysis of succinyl-CoA to the synthesis of either ATP or GTP and thus represents the only step of substrate-level phosphorylation in the TCA. The beta subunit provides nucleotide specificity of the enzyme and binds the substrate succinate, while the binding sites for coenzyme A and phosphate are found in the alpha subunit. In Chlamydia trachomatis serovar L2 (strain ATCC VR-902B / DSM 19102 / 434/Bu), this protein is Succinate--CoA ligase [ADP-forming] subunit beta.